The following is a 275-amino-acid chain: Formamidopyrimidine-DNA glycosylase (275 aa).

Proline 2 acts as the Schiff-base intermediate with DNA in catalysis. Glutamate 3 functions as the Proton donor in the catalytic mechanism. Lysine 58 functions as the Proton donor; for beta-elimination activity in the catalytic mechanism. DNA-binding residues include histidine 93, arginine 111, and arginine 156. The FPG-type zinc finger occupies 241-275 (FVYDRAGQPCRVCGTPIRQIVQGQRSTYYCPTCQR). Arginine 265 functions as the Proton donor; for delta-elimination activity in the catalytic mechanism.

It belongs to the FPG family. As to quaternary structure, monomer. It depends on Zn(2+) as a cofactor.

The enzyme catalyses Hydrolysis of DNA containing ring-opened 7-methylguanine residues, releasing 2,6-diamino-4-hydroxy-5-(N-methyl)formamidopyrimidine.. It carries out the reaction 2'-deoxyribonucleotide-(2'-deoxyribose 5'-phosphate)-2'-deoxyribonucleotide-DNA = a 3'-end 2'-deoxyribonucleotide-(2,3-dehydro-2,3-deoxyribose 5'-phosphate)-DNA + a 5'-end 5'-phospho-2'-deoxyribonucleoside-DNA + H(+). Functionally, involved in base excision repair of DNA damaged by oxidation or by mutagenic agents. Acts as a DNA glycosylase that recognizes and removes damaged bases. Has a preference for oxidized purines, such as 7,8-dihydro-8-oxoguanine (8-oxoG). Has AP (apurinic/apyrimidinic) lyase activity and introduces nicks in the DNA strand. Cleaves the DNA backbone by beta-delta elimination to generate a single-strand break at the site of the removed base with both 3'- and 5'-phosphates. This Burkholderia cenocepacia (strain ATCC BAA-245 / DSM 16553 / LMG 16656 / NCTC 13227 / J2315 / CF5610) (Burkholderia cepacia (strain J2315)) protein is Formamidopyrimidine-DNA glycosylase.